A 433-amino-acid polypeptide reads, in one-letter code: Trigger factor (433 aa).

Residues 161–246 form the PPIase FKBP-type domain; the sequence is GDRVTMDFVG…AKKVEARDLP (86 aa).

The protein belongs to the FKBP-type PPIase family. Tig subfamily.

The protein localises to the cytoplasm. The enzyme catalyses [protein]-peptidylproline (omega=180) = [protein]-peptidylproline (omega=0). In terms of biological role, involved in protein export. Acts as a chaperone by maintaining the newly synthesized protein in an open conformation. Functions as a peptidyl-prolyl cis-trans isomerase. The protein is Trigger factor of Idiomarina loihiensis (strain ATCC BAA-735 / DSM 15497 / L2-TR).